A 205-amino-acid chain; its full sequence is UPF0301 protein Bind_0718 (205 aa).

The protein belongs to the UPF0301 (AlgH) family.

This chain is UPF0301 protein Bind_0718, found in Beijerinckia indica subsp. indica (strain ATCC 9039 / DSM 1715 / NCIMB 8712).